Consider the following 176-residue polypeptide: Endoribonuclease YbeY (176 aa).

Zn(2+) contacts are provided by histidine 117, histidine 121, and histidine 127.

Belongs to the endoribonuclease YbeY family. Requires Zn(2+) as cofactor.

It localises to the cytoplasm. Its function is as follows. Single strand-specific metallo-endoribonuclease involved in late-stage 70S ribosome quality control and in maturation of the 3' terminus of the 16S rRNA. In Methylocella silvestris (strain DSM 15510 / CIP 108128 / LMG 27833 / NCIMB 13906 / BL2), this protein is Endoribonuclease YbeY.